Reading from the N-terminus, the 448-residue chain is Beta-glucosidase A (448 aa).

The Proton donor role is filled by glutamate 166. Glutamate 352 serves as the catalytic Nucleophile.

Belongs to the glycosyl hydrolase 1 family. In terms of assembly, homooctamer.

It carries out the reaction Hydrolysis of terminal, non-reducing beta-D-glucosyl residues with release of beta-D-glucose.. In terms of biological role, bglA is intracellular and cleaves cellobiose probably through inorganic phosphate mediated hydrolysis. This Paenibacillus polymyxa (Bacillus polymyxa) protein is Beta-glucosidase A (bglA).